The primary structure comprises 204 residues: Partner of Y14 and mago (204 aa).

Disordered stretches follow at residues 1–27 (MSTY…RKAR) and 52–142 (QRQA…LDAP). Positions 68-90 (ESKKEREKQERTRAKKQEKESGR) are enriched in basic and acidic residues. Residues 120 to 130 (PSGSRDINSIS) show a composition bias toward polar residues. The stretch at 149–181 (AKQLKKLRKKIREIEQIESRIQAGEQKKLDKDQ) forms a coiled coil.

The protein belongs to the pym family. In terms of assembly, interacts (via N-terminus) with mago and tsu/Y14; the interaction is direct.

It localises to the cytoplasm. The protein localises to the nucleus. Its function is as follows. Regulator of the exon junction complex (EJC), a multiprotein complex that associates immediately upstream of the exon-exon junction on mRNAs and serves as a positional landmarks for the intron exon structure of genes and directs post-transcriptional processes in the cytoplasm such as mRNA export, nonsense-mediated mRNA decay (NMD) or translation. The protein is Partner of Y14 and mago of Drosophila simulans (Fruit fly).